Here is a 380-residue protein sequence, read N- to C-terminus: Cytochrome b (380 aa).

Helical transmembrane passes span 33 to 53, 77 to 98, 113 to 133, and 178 to 198; these read FGSLLGLCLASQILTGLFLAM, WLIRNMHANGASFFFICLYLHI, WNVGVVLLLLVMMTAFVGYVL, and FFAFHFLFPFVILAAAVLHLL. Heme b is bound by residues His-83 and His-97. Residues His-182 and His-196 each contribute to the heme b site. Position 201 (His-201) interacts with a ubiquinone. 4 helical membrane-spanning segments follow: residues 226–246, 288–308, 320–340, and 347–367; these read YKDLLGFAVLLMGLTSLALFS, LGGVLALLASILILMVVPFLH, ASQFLFWTLVADVVVLTWIGG, and FIIIGQVASVLYFSLFLVLFP.

Belongs to the cytochrome b family. In terms of assembly, the cytochrome bc1 complex contains 3 respiratory subunits (MT-CYB, CYC1 and UQCRFS1), 2 core proteins (UQCRC1 and UQCRC2) and probably 6 low-molecular weight proteins. Heme b serves as cofactor.

The protein localises to the mitochondrion inner membrane. Component of the ubiquinol-cytochrome c reductase complex (complex III or cytochrome b-c1 complex) that is part of the mitochondrial respiratory chain. The b-c1 complex mediates electron transfer from ubiquinol to cytochrome c. Contributes to the generation of a proton gradient across the mitochondrial membrane that is then used for ATP synthesis. The chain is Cytochrome b (mt-cyb) from Scomber scombrus (Atlantic mackerel).